The primary structure comprises 481 residues: 6-phosphogluconate dehydrogenase, decarboxylating (481 aa).

NADP(+) is bound by residues 11–16, 34–36, 76–78, and asparagine 104; these read GLAVMG, NRT, and VKA. Substrate-binding positions include asparagine 104 and 130 to 132; that span reads SGG. The active-site Proton acceptor is lysine 184. Residue 187 to 188 participates in substrate binding; the sequence is HN. Glutamate 191 acts as the Proton donor in catalysis. Residues tyrosine 192, lysine 259, arginine 286, arginine 445, and histidine 451 each contribute to the substrate site.

The protein belongs to the 6-phosphogluconate dehydrogenase family. In terms of assembly, homodimer.

The enzyme catalyses 6-phospho-D-gluconate + NADP(+) = D-ribulose 5-phosphate + CO2 + NADPH. Its pathway is carbohydrate degradation; pentose phosphate pathway; D-ribulose 5-phosphate from D-glucose 6-phosphate (oxidative stage): step 3/3. Catalyzes the oxidative decarboxylation of 6-phosphogluconate to ribulose 5-phosphate and CO(2), with concomitant reduction of NADP to NADPH. This Ceratitis capitata (Mediterranean fruit fly) protein is 6-phosphogluconate dehydrogenase, decarboxylating (Pgd).